Consider the following 668-residue polypeptide: Break repair meiotic recombinase recruitment factor 1 (668 aa).

Disordered regions lie at residues 1–142 (MTKR…AQSP), 155–333 (LQEA…GCSS), 349–465 (LEER…GGQN), 482–521 (VLEHREIADDPLQEPGAQQGIPDTTSELAGQRDHLPHSAD), and 642–668 (LGGKAPLPYPSKGPGNIPRGDPPWREL). Residues 114–125 (TRKEEMKDEDRG) are compositionally biased toward basic and acidic residues. A compositionally biased stretch (polar residues) spans 166–180 (QADSARPEQSSQSPV). The segment covering 208 to 251 (SQDHLSEQGADDSKPETDRVPGDGGQKEHLPSIDSEGEKPDRGA) has biased composition (basic and acidic residues). The segment covering 279–296 (TPASAPTSGPAPGLGPAS) has biased composition (low complexity). A compositionally biased stretch (polar residues) spans 305-316 (AQGSPDPQQTPS). Residue Ser370 is modified to Phosphoserine. Residues 391-400 (TGETTGESGE) are compositionally biased toward low complexity.

In terms of assembly, interacts with HSF2BP (via N-terminus) and BRCA2; the interaction with HSF2BP is direct and allows the formation of a ternary complex. The complex BRME1:HSF2BP:BRCA2 interacts with SPATA22, MEIOB and RAD51.

It localises to the chromosome. Its function is as follows. Meiotic recombination factor component of recombination bridges involved in meiotic double-strand break repair. Modulates the localization of recombinases DMC1:RAD51 to meiotic double-strand break (DSB) sites through the interaction with and stabilization of the BRCA2:HSF2BP complex during meiotic recombination. Indispensable for the DSB repair, homologous synapsis, and crossover formation that are needed for progression past metaphase I, is essential for spermatogenesis and male fertility. This is Break repair meiotic recombinase recruitment factor 1 from Homo sapiens (Human).